The sequence spans 248 residues: Ribosomal RNA small subunit methyltransferase J (248 aa).

Residues 98–99, 114–115, 150–151, and Asp168 contribute to the S-adenosyl-L-methionine site; these read RD, ER, and SS.

It belongs to the methyltransferase superfamily. RsmJ family.

Its subcellular location is the cytoplasm. It carries out the reaction guanosine(1516) in 16S rRNA + S-adenosyl-L-methionine = N(2)-methylguanosine(1516) in 16S rRNA + S-adenosyl-L-homocysteine + H(+). Specifically methylates the guanosine in position 1516 of 16S rRNA. This is Ribosomal RNA small subunit methyltransferase J from Shewanella baltica (strain OS223).